Reading from the N-terminus, the 1363-residue chain is DNA-directed RNA polymerase subunit beta (1363 aa).

It belongs to the RNA polymerase beta chain family. The RNAP catalytic core consists of 2 alpha, 1 beta, 1 beta' and 1 omega subunit. When a sigma factor is associated with the core the holoenzyme is formed, which can initiate transcription.

It carries out the reaction RNA(n) + a ribonucleoside 5'-triphosphate = RNA(n+1) + diphosphate. In terms of biological role, DNA-dependent RNA polymerase catalyzes the transcription of DNA into RNA using the four ribonucleoside triphosphates as substrates. In Pelagibacter ubique (strain HTCC1062), this protein is DNA-directed RNA polymerase subunit beta.